The chain runs to 213 residues: Probable GTP-binding protein EngB (213 aa).

In terms of domain architecture, EngB-type G spans 30 to 204 (EGFEVAFAGR…YTALAGWMEL (175 aa)). GTP-binding positions include 38 to 45 (GRSNAGKS), 64 to 68 (GRTQL), 82 to 85 (DLPG), 149 to 152 (TKAD), and 182 to 185 (LFSA). Residues Ser-45 and Thr-66 each contribute to the Mg(2+) site.

It belongs to the TRAFAC class TrmE-Era-EngA-EngB-Septin-like GTPase superfamily. EngB GTPase family. Mg(2+) is required as a cofactor.

Necessary for normal cell division and for the maintenance of normal septation. The protein is Probable GTP-binding protein EngB of Pseudomonas fluorescens (strain SBW25).